The chain runs to 444 residues: Phosphoglucosamine mutase (444 aa).

The Phosphoserine intermediate role is filled by serine 102. Residues serine 102, aspartate 241, aspartate 243, and aspartate 245 each coordinate Mg(2+). The residue at position 102 (serine 102) is a Phosphoserine.

It belongs to the phosphohexose mutase family. It depends on Mg(2+) as a cofactor. Post-translationally, activated by phosphorylation.

The enzyme catalyses alpha-D-glucosamine 1-phosphate = D-glucosamine 6-phosphate. In terms of biological role, catalyzes the conversion of glucosamine-6-phosphate to glucosamine-1-phosphate. This is Phosphoglucosamine mutase from Acidovorax sp. (strain JS42).